We begin with the raw amino-acid sequence, 632 residues long: Biosynthetic arginine decarboxylase (632 aa).

Lysine 101 bears the N6-(pyridoxal phosphate)lysine mark. 281-291 lines the substrate pocket; the sequence is FDVGGGLGVDY.

The protein belongs to the Orn/Lys/Arg decarboxylase class-II family. SpeA subfamily. Mg(2+) is required as a cofactor. Pyridoxal 5'-phosphate serves as cofactor.

It carries out the reaction L-arginine + H(+) = agmatine + CO2. It participates in amine and polyamine biosynthesis; agmatine biosynthesis; agmatine from L-arginine: step 1/1. Functionally, catalyzes the biosynthesis of agmatine from arginine. This is Biosynthetic arginine decarboxylase from Klebsiella pneumoniae (strain 342).